Here is an 89-residue protein sequence, read N- to C-terminus: uncharacterized protein (89 aa).

Residues 66-89 (RIKEQSSSSSATRTTQEPSLHLPD) form a disordered region.

This is an uncharacterized protein from Cestrum parqui (CmYLCV).